Consider the following 279-residue polypeptide: HTH-type transcriptional regulator HdfR (279 aa).

An HTH lysR-type domain is found at 1–58 (MDTELLKTFLEVSRTRHFGRAAESLYLTQSAVSFRIRQLENQLGVNLFTRHRNNIRLT). Positions 18 to 37 (FGRAAESLYLTQSAVSFRIR) form a DNA-binding region, H-T-H motif.

Belongs to the LysR transcriptional regulatory family.

Negatively regulates the transcription of the flagellar master operon flhDC by binding to the upstream region of the operon. This Escherichia coli (strain SE11) protein is HTH-type transcriptional regulator HdfR.